The following is a 62-amino-acid chain: LECHDQQSSQTPTTTGCSGGETNCYKKRWRDHRGYRTERGCGCPSVKNGIEINCCTTDRCNN.

Polar residues predominate over residues 1–16 (LECHDQQSSQTPTTTG). The disordered stretch occupies residues 1–22 (LECHDQQSSQTPTTTGCSGGET). Intrachain disulfides connect Cys-3/Cys-24, Cys-17/Cys-41, Cys-43/Cys-54, and Cys-55/Cys-60.

This sequence belongs to the three-finger toxin family. Short-chain subfamily. Type I alpha-neurotoxin sub-subfamily. As to expression, expressed by the venom gland.

It localises to the secreted. In terms of biological role, binds to muscle nicotinic acetylcholine receptor (nAChR) and inhibit acetylcholine from binding to the receptor, thereby impairing neuromuscular transmission. This Naja sputatrix (Malayan spitting cobra) protein is Neurotoxin 3.